The following is a 506-amino-acid chain: MQNFKELGISDNTVQSLESMGFKEPTPIQKDSIPYALQGIDILGQAQTGTGKTGAFGIPLIEKVVWKQGVQSLILAPTRELAMQVAEQLREFSRGQGVQVVTVFGGMPIERQIKALKKGPQIVVGTPGRVIDHLNRRTLKTDGIHTLILDEADEMMNMGFIDDMRFIMDKIPAVQRQTMLFSATMPKAIQALVQQFMKSPKIIKTMNNEMSDPQIEEFYTIVKELEKFDTFTNFLDVHQPELAIVFGRTKRRVDELTSALISKGYKAEGLHGDITQAKRLEVLKKFKNDQINILVATDVAARGLDISGVSHVYNFDIPQDTESYTHRIGRTGRAGKEGIAVTFVNPIEMDYIRQIEDANGRKMSALRPPHRKEVLQAREDDIKEKVENWMSKESESRLKRISTELLNEYNDVDLVAALLQELVEANDEVEVQLTFEKPLSRKGRNGKPSGSRNRNSKRGNPKFDSKSKRSKGYSSKKKSTKKFDRKEKSSGGSRPMKGRTFADHQK.

The Q motif signature appears at 2-30; sequence QNFKELGISDNTVQSLESMGFKEPTPIQK. Residues 33–203 enclose the Helicase ATP-binding domain; it reads IPYALQGIDI…QQFMKSPKII (171 aa). An ATP-binding site is contributed by 46 to 53; it reads AQTGTGKT. The DEAD box signature appears at 150–153; the sequence is DEAD. The region spanning 214 to 375 is the Helicase C-terminal domain; the sequence is QIEEFYTIVK…LRPPHRKEVL (162 aa). The disordered stretch occupies residues 436–506; it reads EKPLSRKGRN…KGRTFADHQK (71 aa). Residues 468-480 show a composition bias toward basic residues; it reads KRSKGYSSKKKST.

It belongs to the DEAD box helicase family. CshA subfamily. In terms of assembly, oligomerizes, may be a member of the RNA degradosome.

It localises to the cytoplasm. The catalysed reaction is ATP + H2O = ADP + phosphate + H(+). Its function is as follows. DEAD-box RNA helicase possibly involved in RNA degradation. Unwinds dsRNA in both 5'- and 3'-directions, has RNA-dependent ATPase activity. This is DEAD-box ATP-dependent RNA helicase CshA from Staphylococcus aureus (strain bovine RF122 / ET3-1).